We begin with the raw amino-acid sequence, 147 residues long: Hemoglobin subunit gamma (147 aa).

Positions 3-147 (NFTAEDKAAI…VASALASRYH (145 aa)) constitute a Globin domain. 2 residues coordinate heme b: histidine 64 and histidine 93.

Belongs to the globin family. In terms of assembly, heterotetramer of two alpha chains and two gamma chains in fetal hemoglobin (Hb F). As to expression, red blood cells.

Gamma chains make up the fetal hemoglobin F, in combination with alpha chains. In Callithrix jacchus (White-tufted-ear marmoset), this protein is Hemoglobin subunit gamma (HBG1).